The following is a 338-amino-acid chain: 4-hydroxy-2-oxovalerate aldolase (338 aa).

The 251-residue stretch at 4 to 254 folds into the Pyruvate carboxyltransferase domain; that stretch reads PRLTDTTLRD…NPGLDVLALM (251 aa). Substrate is bound at residue 12–13; sequence RD. A Mn(2+)-binding site is contributed by D13. H16 acts as the Proton acceptor in catalysis. Positions 166 and 193 each coordinate substrate. The Mn(2+) site is built by H193 and H195. Y284 serves as a coordination point for substrate.

Belongs to the 4-hydroxy-2-oxovalerate aldolase family.

The catalysed reaction is (S)-4-hydroxy-2-oxopentanoate = acetaldehyde + pyruvate. The polypeptide is 4-hydroxy-2-oxovalerate aldolase (Roseiflexus sp. (strain RS-1)).